The chain runs to 479 residues: UDP-glycosyltransferase 84A3 (479 aa).

Residue histidine 19 is the Proton acceptor of the active site. Residue histidine 19 coordinates an anthocyanidin. UDP-alpha-D-glucose is bound by residues glutamine 346, histidine 361, tryptophan 364, asparagine 365, serine 366, and glutamate 369. Position 384 (glycine 384) interacts with an anthocyanidin. Residues aspartate 385 and glutamine 386 each contribute to the UDP-alpha-D-glucose site.

Belongs to the UDP-glycosyltransferase family.

The catalysed reaction is (E)-4-coumarate + UDP-alpha-D-glucose = 4-O-(beta-D-glucosyl)-trans-4-coumarate + UDP + H(+). It catalyses the reaction (E)-ferulate + UDP-alpha-D-glucose = 1-O-[(E)-feruloyl]-beta-D-glucose + UDP. It carries out the reaction (E)-caffeate + UDP-alpha-D-glucose = 1-O-[(E)-caffeoyl]-beta-D-glucose + UDP. The enzyme catalyses (E)-sinapate + UDP-alpha-D-glucose = 1-O-(trans-sinapoyl)-beta-D-glucose + UDP. The catalysed reaction is (E)-cinnamate + UDP-alpha-D-glucose = 1-O-(trans-cinnamoyl)-beta-D-glucose + UDP. Functionally, UDP-glucosyltransferase that forms glucose esters with phenylpropanoids. Glucosylates 4-coumarate, ferulate, caffeate, sinapate and cinnamate. This chain is UDP-glycosyltransferase 84A3, found in Arabidopsis thaliana (Mouse-ear cress).